We begin with the raw amino-acid sequence, 664 residues long: Type IV inositol polyphosphate 5-phosphatase 3 (664 aa).

A disordered region spans residues 35 to 76 (GRDPEYGADTDNESENEDAREDNDDSSSDEEGGSGSRGRESK). Acidic residues predominate over residues 40–66 (YGADTDNESENEDAREDNDDSSSDEEG). 2 catalytic regions span residues 514-529 (ERII…LSSS) and 592-607 (PKRT…SYGK).

This sequence belongs to the inositol polyphosphate 5-phosphatase family.

It catalyses the reaction a 1,2-diacyl-sn-glycero-3-phospho-(1D-myo-inositol-4,5-bisphosphate) + H2O = a 1,2-diacyl-sn-glycero-3-phospho-(1D-myo-inositol 4-phosphate) + phosphate. The catalysed reaction is a 1,2-diacyl-sn-glycero-3-phospho-(1D-myo-inositol-3,4,5-trisphosphate) + H2O = a 1,2-diacyl-sn-glycero-3-phospho-(1D-myo-inositol-3,4-bisphosphate) + phosphate. Functionally, has phosphatase activity toward PtdIns(4,5)P2 and PtdIns(3,4,5)P3. This chain is Type IV inositol polyphosphate 5-phosphatase 3, found in Arabidopsis thaliana (Mouse-ear cress).